Reading from the N-terminus, the 435-residue chain is Tol-Pal system protein TolB (435 aa).

Positions 1-26 (MKIFSPIRLVLAIAALMSVFSAPAFA) are cleaved as a signal peptide.

The protein belongs to the TolB family. The Tol-Pal system is composed of five core proteins: the inner membrane proteins TolA, TolQ and TolR, the periplasmic protein TolB and the outer membrane protein Pal. They form a network linking the inner and outer membranes and the peptidoglycan layer.

It is found in the periplasm. Part of the Tol-Pal system, which plays a role in outer membrane invagination during cell division and is important for maintaining outer membrane integrity. This chain is Tol-Pal system protein TolB, found in Agrobacterium fabrum (strain C58 / ATCC 33970) (Agrobacterium tumefaciens (strain C58)).